A 368-amino-acid chain; its full sequence is tRNA-specific 2-thiouridylase MnmA (368 aa).

ATP contacts are provided by residues 11–18 (GMSGGVDS) and Met37. Positions 97–99 (NPD) are interaction with target base in tRNA. Cys102 acts as the Nucleophile in catalysis. The cysteines at positions 102 and 199 are disulfide-linked. Gly127 contacts ATP. The interaction with tRNA stretch occupies residues 149–151 (KDQ). Residue Cys199 is the Cysteine persulfide intermediate of the active site. The segment at 311–312 (RY) is interaction with tRNA.

The protein belongs to the MnmA/TRMU family. Interacts with TusE.

It localises to the cytoplasm. It catalyses the reaction S-sulfanyl-L-cysteinyl-[protein] + uridine(34) in tRNA + AH2 + ATP = 2-thiouridine(34) in tRNA + L-cysteinyl-[protein] + A + AMP + diphosphate + H(+). Catalyzes the 2-thiolation of uridine at the wobble position (U34) of tRNA(Lys), tRNA(Glu) and tRNA(Gln), leading to the formation of s(2)U34, the first step of tRNA-mnm(5)s(2)U34 synthesis. Sulfur is provided by IscS, via a sulfur-relay system. Binds ATP and its substrate tRNAs. In Salmonella arizonae (strain ATCC BAA-731 / CDC346-86 / RSK2980), this protein is tRNA-specific 2-thiouridylase MnmA.